Here is a 67-residue protein sequence, read N- to C-terminus: Mitotic-spindle organizing protein 1A (67 aa).

The protein belongs to the MOZART1 family. As to quaternary structure, part of the gamma-tubulin complex. Interacts with GIP1 and GCP3. As to expression, mostly expressed in siliques and flowers, and, to a lower extent, in leaves, roots and seedlings, with highest levels in young tissues, meristematic cells, and the vasculature.

Its subcellular location is the cytoplasm. It is found in the cytoskeleton. The protein localises to the microtubule organizing center. The protein resides in the spindle. It localises to the nucleus. Its subcellular location is the phragmoplast. It is found in the nucleus envelope. In terms of biological role, required for gamma-tubulin complex recruitment to the microtubule organizing centers (MTOCs). During mitosis, modulates gamma-tubulin complex localization, spindle stability and chromosomal segregation. Necessary for gametophyte development and embryogenesis. The chain is Mitotic-spindle organizing protein 1A (GIP2) from Arabidopsis thaliana (Mouse-ear cress).